The chain runs to 1424 residues: S-layer protein A (1424 aa).

A signal peptide spans 1–24 (MNKLVGLLVSSLFLASILIGIAPA). 28 N-linked (GlcNAc...) asparagine glycosylation sites follow: Asn60, Asn70, Asn276, Asn295, Asn342, Asn358, Asn377, Asn468, Asn517, Asn545, Asn559, Asn581, Asn633, Asn714, Asn875, Asn914, Asn955, Asn989, Asn1018, Asn1042, Asn1093, Asn1134, Asn1197, Asn1217, Asn1252, Asn1276, Asn1304, and Asn1419.

The protein belongs to the Sulfolobales SlaA family. The mushroom-shaped unit cells of the Sulfolobales' S-layers may consist of three SlaB subunits and six SlaA subunits. Glycosylated. C-terminal glycosylation sites are modified with a heterogeneous family of glycans, with the largest having a composition Glc(1)Man(2)GlcNAc(2) plus 6-sulfoquinovose (QuiS).

The protein resides in the secreted. It is found in the cell wall. The protein localises to the S-layer. S-layer large protein. May form the highly ordered outer sheath. The chain is S-layer protein A from Sulfolobus acidocaldarius (strain ATCC 33909 / DSM 639 / JCM 8929 / NBRC 15157 / NCIMB 11770).